A 397-amino-acid chain; its full sequence is RNA pseudouridine synthase 5 (397 aa).

Residues 64 to 114 enclose the S4 RNA-binding domain; the sequence is APLPGWIKRIRDGQITVDGEVATDPDMILREGSKLVYHRLPWQEPFAPHLL.

This sequence belongs to the pseudouridine synthase RluA family.

It catalyses the reaction a uridine in RNA = a pseudouridine in RNA. This chain is RNA pseudouridine synthase 5, found in Oryza sativa subsp. japonica (Rice).